The chain runs to 276 residues: NH(3)-dependent NAD(+) synthetase (276 aa).

Position 46-53 (46-53 (GISGGQDS)) interacts with ATP. Aspartate 52 contacts Mg(2+). Arginine 140 provides a ligand contact to deamido-NAD(+). Residue threonine 160 coordinates ATP. Glutamate 165 serves as a coordination point for Mg(2+). 2 residues coordinate deamido-NAD(+): lysine 173 and aspartate 180. Lysine 189 and threonine 211 together coordinate ATP. Deamido-NAD(+) is bound at residue 260-261 (HK).

It belongs to the NAD synthetase family. As to quaternary structure, homodimer.

The enzyme catalyses deamido-NAD(+) + NH4(+) + ATP = AMP + diphosphate + NAD(+) + H(+). The protein operates within cofactor biosynthesis; NAD(+) biosynthesis; NAD(+) from deamido-NAD(+) (ammonia route): step 1/1. Its function is as follows. Catalyzes the ATP-dependent amidation of deamido-NAD to form NAD. Uses ammonia as a nitrogen source. This Citrobacter koseri (strain ATCC BAA-895 / CDC 4225-83 / SGSC4696) protein is NH(3)-dependent NAD(+) synthetase.